We begin with the raw amino-acid sequence, 473 residues long: Photosystem II CP43 reaction center protein (473 aa).

Residues 1–14 (MKTLYSLRRFYPVE) constitute a propeptide that is removed on maturation. N-acetylthreonine is present on Thr-15. At Thr-15 the chain carries Phosphothreonine. A run of 5 helical transmembrane segments spans residues 69-93 (LFEVAHFVPEKPMYEQGLILLPHLA), 134-155 (LLGPETLEESFPFFGYVWKDRN), 178-200 (KALYFGGVYDTWAPGGGDVRKIT), 255-275 (KPFAWARRAFVWSGEAYLSYS), and 291-312 (WFNNTAYPSEFYGPTGPEASQA). Glu-367 provides a ligand contact to [CaMn4O5] cluster. The helical transmembrane segment at 447 to 471 (RARAAAAGFEKGIDRDFEPVLSMTP) threads the bilayer.

It belongs to the PsbB/PsbC family. PsbC subfamily. In terms of assembly, PSII is composed of 1 copy each of membrane proteins PsbA, PsbB, PsbC, PsbD, PsbE, PsbF, PsbH, PsbI, PsbJ, PsbK, PsbL, PsbM, PsbT, PsbX, PsbY, PsbZ, Psb30/Ycf12, at least 3 peripheral proteins of the oxygen-evolving complex and a large number of cofactors. It forms dimeric complexes. Binds multiple chlorophylls and provides some of the ligands for the Ca-4Mn-5O cluster of the oxygen-evolving complex. It may also provide a ligand for a Cl- that is required for oxygen evolution. PSII binds additional chlorophylls, carotenoids and specific lipids. is required as a cofactor.

The protein localises to the plastid. It is found in the chloroplast thylakoid membrane. In terms of biological role, one of the components of the core complex of photosystem II (PSII). It binds chlorophyll and helps catalyze the primary light-induced photochemical processes of PSII. PSII is a light-driven water:plastoquinone oxidoreductase, using light energy to abstract electrons from H(2)O, generating O(2) and a proton gradient subsequently used for ATP formation. This is Photosystem II CP43 reaction center protein from Calycanthus floridus var. glaucus (Eastern sweetshrub).